The primary structure comprises 393 residues: Formate-dependent phosphoribosylglycinamide formyltransferase (393 aa).

N(1)-(5-phospho-beta-D-ribosyl)glycinamide contacts are provided by residues 22 to 23 (EL) and glutamate 82. ATP-binding positions include arginine 114, lysine 155, 160 to 165 (SSGKGQ), 195 to 198 (EGFI), and glutamate 203. The region spanning 119–308 (RLAAEELDLP…QFALHARAIL (190 aa)) is the ATP-grasp domain. Residues glutamate 267 and glutamate 279 each contribute to the Mg(2+) site. Residues aspartate 286, lysine 356, and 363–364 (RR) each bind N(1)-(5-phospho-beta-D-ribosyl)glycinamide.

The protein belongs to the PurK/PurT family. In terms of assembly, homodimer.

The enzyme catalyses N(1)-(5-phospho-beta-D-ribosyl)glycinamide + formate + ATP = N(2)-formyl-N(1)-(5-phospho-beta-D-ribosyl)glycinamide + ADP + phosphate + H(+). Its pathway is purine metabolism; IMP biosynthesis via de novo pathway; N(2)-formyl-N(1)-(5-phospho-D-ribosyl)glycinamide from N(1)-(5-phospho-D-ribosyl)glycinamide (formate route): step 1/1. In terms of biological role, involved in the de novo purine biosynthesis. Catalyzes the transfer of formate to 5-phospho-ribosyl-glycinamide (GAR), producing 5-phospho-ribosyl-N-formylglycinamide (FGAR). Formate is provided by PurU via hydrolysis of 10-formyl-tetrahydrofolate. This is Formate-dependent phosphoribosylglycinamide formyltransferase from Pseudomonas putida (strain ATCC 47054 / DSM 6125 / CFBP 8728 / NCIMB 11950 / KT2440).